A 357-amino-acid chain; its full sequence is MKQKELWINQIKGLCICLVVIYHSVITFYPHLTTFQHPLSEVLSKCWIYFNLYLAPFRMPVFFFISGYLIRRYIDSVPWGNCLDKRIWNIFWVLALWGVVQWLALSALNQWLAPERDLSNASNAAYADSTGEFLHGMITASTSLWYLYALIVYFVVCKIFSRLALPLFALFVLLSVAVNFVPTPWWGMNSVIRNLPYYSLGAWFGATIMTCVKEVPLRRHLLMASLLTVLAVGAWLFTISLLLSLVSIVVIMKLFYQYEQRFGMRSTSLLNVIGSNTIAIYTTHRILVEIFSLTLLAQMNAARWSPQVELTLLLVYPFVSLFICTVAGLLVRKLSQRAFSDLLFSPPSLPAAVSYSR.

Topologically, residues 1–12 (MKQKELWINQIK) are cytoplasmic. The chain crosses the membrane as a helical span at residues 13-33 (GLCICLVVIYHSVITFYPHLT). Residues 34 to 49 (TFQHPLSEVLSKCWIY) are Periplasmic-facing. The chain crosses the membrane as a helical span at residues 50–70 (FNLYLAPFRMPVFFFISGYLI). Residues 71-86 (RRYIDSVPWGNCLDKR) lie on the Cytoplasmic side of the membrane. The helical transmembrane segment at 87–107 (IWNIFWVLALWGVVQWLALSA) threads the bilayer. Residues 108–135 (LNQWLAPERDLSNASNAAYADSTGEFLH) are Periplasmic-facing. Residues 136-156 (GMITASTSLWYLYALIVYFVV) traverse the membrane as a helical segment. The Cytoplasmic portion of the chain corresponds to 157–162 (CKIFSR). The helical transmembrane segment at 163-183 (LALPLFALFVLLSVAVNFVPT) threads the bilayer. The Periplasmic segment spans residues 184 to 196 (PWWGMNSVIRNLP). Residues 197 to 217 (YYSLGAWFGATIMTCVKEVPL) traverse the membrane as a helical segment. At 218–231 (RRHLLMASLLTVLA) the chain is on the cytoplasmic side. A helical membrane pass occupies residues 232–252 (VGAWLFTISLLLSLVSIVVIM). Topologically, residues 253–310 (KLFYQYEQRFGMRSTSLLNVIGSNTIAIYTTHRILVEIFSLTLLAQMNAARWSPQVEL) are periplasmic. Residues 311–331 (TLLLVYPFVSLFICTVAGLLV) traverse the membrane as a helical segment. Over 332–357 (RKLSQRAFSDLLFSPPSLPAAVSYSR) the chain is Cytoplasmic.

Belongs to the acyltransferase 3 family.

The protein resides in the cell inner membrane. The sequence is that of Inner membrane protein YcfT (ycfT) from Escherichia coli (strain K12).